A 113-amino-acid chain; its full sequence is MNTVRVTFLPVFVLAVSLGQADKDENRMEMQEKTEQGKSYLDFAENLLLQKLEELEAKLLEEDSEESRNSRQKRCIGEGVPCDENDPRCCSGLVCLKPTLHGIWYKSYYCYKK.

The N-terminal stretch at 1 to 21 (MNTVRVTFLPVFVLAVSLGQA) is a signal peptide. A propeptide spanning residues 22-74 (DKDENRMEMQEKTEQGKSYLDFAENLLLQKLEELEAKLLEEDSEESRNSRQKR) is cleaved from the precursor. Residues 61 to 83 (EEDSEESRNSRQKRCIGEGVPCD) form a disordered region. Intrachain disulfides connect Cys75–Cys90, Cys82–Cys95, and Cys89–Cys110.

It belongs to the neurotoxin 14 (magi-1) family. 01 (HNTX-16) subfamily. In terms of tissue distribution, expressed by the venom gland.

It is found in the secreted. This is U11-theraphotoxin-Hhn1a from Cyriopagopus hainanus (Chinese bird spider).